The sequence spans 318 residues: Xanthocillin biosynthesis cluster transcription factor xanC (318 aa).

Basic and acidic residues predominate over residues M1–R27. The tract at residues M1–R39 is disordered. One can recognise a bZIP domain in the interval Q20–V52. Residues R25 to K40 are basic motif. Residues I41–L48 are leucine-zipper. Disordered stretches follow at residues P71 to V107, P123 to D171, and G269 to L318. Composition is skewed to low complexity over residues P123 to L139 and S147 to D171. Positions A293 to L318 are enriched in polar residues.

Belongs to the bZIP family.

It localises to the nucleus. Transcription regulator that specifically up-regulates the gene cluster that mediates the biosynthesis of the isocyanide xanthocillin and its derivatives. The polypeptide is Xanthocillin biosynthesis cluster transcription factor xanC (Aspergillus fumigatus (strain ATCC MYA-4609 / CBS 101355 / FGSC A1100 / Af293) (Neosartorya fumigata)).